Reading from the N-terminus, the 568-residue chain is Potassium-transporting ATPase potassium-binding subunit (568 aa).

A run of 10 helical transmembrane segments spans residues 3-23 (TEIL…YPLG), 64-84 (FLKA…VLLV), 133-153 (FVIM…MAGV), 179-199 (ILLP…TPMG), 255-275 (MVEC…LGFY), 281-301 (LGYS…FINV), 375-395 (FGGV…AVFI), 418-438 (IATF…AISS), 497-517 (IVLI…AGLL), and 535-555 (VTFA…SFFP).

This sequence belongs to the KdpA family. In terms of assembly, the system is composed of three essential subunits: KdpA, KdpB and KdpC.

The protein localises to the cell inner membrane. In terms of biological role, part of the high-affinity ATP-driven potassium transport (or Kdp) system, which catalyzes the hydrolysis of ATP coupled with the electrogenic transport of potassium into the cytoplasm. This subunit binds the periplasmic potassium ions and delivers the ions to the membrane domain of KdpB through an intramembrane tunnel. In Bacteroides fragilis (strain ATCC 25285 / DSM 2151 / CCUG 4856 / JCM 11019 / LMG 10263 / NCTC 9343 / Onslow / VPI 2553 / EN-2), this protein is Potassium-transporting ATPase potassium-binding subunit.